A 208-amino-acid chain; its full sequence is Dephospho-CoA kinase (208 aa).

The 206-residue stretch at 3-208 folds into the DPCK domain; the sequence is EIGLTGGIGS…ALSAAGVTQA (206 aa). 11–16 contacts ATP; that stretch reads GSGKTR.

The protein belongs to the CoaE family.

It is found in the cytoplasm. The catalysed reaction is 3'-dephospho-CoA + ATP = ADP + CoA + H(+). It functions in the pathway cofactor biosynthesis; coenzyme A biosynthesis; CoA from (R)-pantothenate: step 5/5. Functionally, catalyzes the phosphorylation of the 3'-hydroxyl group of dephosphocoenzyme A to form coenzyme A. This Cupriavidus pinatubonensis (strain JMP 134 / LMG 1197) (Cupriavidus necator (strain JMP 134)) protein is Dephospho-CoA kinase.